The chain runs to 194 residues: 5'-deoxynucleotidase VS_2195 (194 aa).

Substrate is bound by residues 18–19 (RW) and H33. An HD domain is found at 30-142 (ISEHSLQVAF…VKQADTICAY (113 aa)). Residues H33, H68, and D69 each contribute to the a divalent metal cation site. Substrate-binding positions include D69, 77-80 (DLPT), and D137. Residue D137 participates in a divalent metal cation binding.

It belongs to the 5DNU family. In terms of assembly, homodimer. The cofactor is a divalent metal cation.

It is found in the cytoplasm. The enzyme catalyses a 2'-deoxyribonucleoside 5'-phosphate + H2O = a 2'-deoxyribonucleoside + phosphate. In terms of biological role, catalyzes the strictly specific dephosphorylation of 2'-deoxyribonucleoside 5'-monophosphates. The protein is 5'-deoxynucleotidase VS_2195 of Vibrio atlanticus (strain LGP32) (Vibrio splendidus (strain Mel32)).